Consider the following 292-residue polypeptide: Selenate reductase subunit B (292 aa).

The tat-type signal signal peptide spans 1-43 (MGSKETKNTSRRDFLIKGAGAAALGAGAFAISQVPLLEKLASA). 3 consecutive 4Fe-4S ferredoxin-type domains span residues 84–113 (WIMVIDLKKCVGCSSCTVACVSENVLPPGV), 129–160 (VTKKFTPRPCMQCEHPPCTKVCPIGATYKSED), and 161–190 (GIVAIDYDKCIGCRYCITACPYGARTFDWG). Residues Cys93, Cys96, Cys99, Cys103, Cys138, Cys141, Cys146, Cys150, Cys170, Cys173, Cys176, Cys180, Cys230, Cys233, Cys245, and Cys249 each contribute to the [4Fe-4S] cluster site.

The complex is composed of three subunits: SrdA, SrdB and SrdC. The cofactor is [4Fe-4S] cluster. Post-translationally, predicted to be exported by the Tat system. The position of the signal peptide cleavage has not been experimentally proven.

Its subcellular location is the secreted. The catalysed reaction is selenite + a quinone + H2O = selenate + a quinol. Component of the respiratory selenate reductase complex, which catalyzes the reduction of selenate to selenite. This subunit probably transfers electrons from SrdC to SrdA. This is Selenate reductase subunit B from Mesobacillus selenatarsenatis (strain DSM 18680 / JCM 14380 / FERM P-15431 / SF-1).